Consider the following 250-residue polypeptide: MATSSITIPTIRTPIHRSKFLGQTHQFSTVNRSVFPPPKQQSKLYQVKAMGKFNLWEVMGGRGLCNGEKGIEKELQRNIEDEQETSKAENNETERESDDSNLSFKVPEDGFEKEMMGLTGGFPGGEKGLKTFIEKNPPPPPPPPPAKQGSDASAVATDKKPKAPKLPLLMPGMIAIVKNQNSPYHMYCGIVQRITDGKAGVLFEGGNWDRLITFRLEELERREKGPPGKNPKSCILEPLIEQMQKEEAAP.

The transit peptide at 1 to 48 directs the protein to the chloroplast; that stretch reads MATSSITIPTIRTPIHRSKFLGQTHQFSTVNRSVFPPPKQQSKLYQVK. Lys52 participates in a covalent cross-link: Glycyl lysine isopeptide (Lys-Gly) (interchain with G-Cter in ubiquitin). Basic and acidic residues-rich tracts occupy residues 76 to 94 and 106 to 115; these read QRNI…NETE and VPEDGFEKEM. 2 disordered regions span residues 76–163 and 222–250; these read QRNI…KPKA and REKG…EAAP. Residues 136–146 are compositionally biased toward pro residues; that stretch reads NPPPPPPPPPA.

As to quaternary structure, part of the chloroplast NDH complex, composed of a mixture of chloroplast and nucleus encoded subunits. Component of the electron donor-binding subcomplex, at least composed of NDHS, NDHT and NDHU. Interacts with the NDH subcomplex A via the protein NDHT and NDHU. Arg-193 is the critical site for the high affinity binding of NDH to ferredoxin.

The protein resides in the plastid. It is found in the chloroplast thylakoid membrane. It carries out the reaction a plastoquinone + NADH + (n+1) H(+)(in) = a plastoquinol + NAD(+) + n H(+)(out). The enzyme catalyses a plastoquinone + NADPH + (n+1) H(+)(in) = a plastoquinol + NADP(+) + n H(+)(out). Functionally, NDH shuttles electrons from NAD(P)H:plastoquinone, via FMN and iron-sulfur (Fe-S) centers, to quinones in the photosynthetic chain and possibly in a chloroplast respiratory chain. The immediate electron acceptor for the enzyme in this species is believed to be plastoquinone. Couples the redox reaction to proton translocation, and thus conserves the redox energy in a proton gradient. Required for the efficient operation of ferredoxin-dependent plastoquinone reduction. Forms the electron donor-binding subcomplex in association with the NDHT and NDHU subunits. This chain is NAD(P)H-quinone oxidoreductase subunit S, chloroplastic, found in Arabidopsis thaliana (Mouse-ear cress).